The following is a 167-amino-acid chain: SsrA-binding protein (167 aa).

The disordered stretch occupies residues 139-167; the sequence is QAHDKRHAEKEREWQRDKQRIMRAHNRNA. The span at 144-158 shows a compositional bias: basic and acidic residues; that stretch reads RHAEKEREWQRDKQR.

This sequence belongs to the SmpB family.

The protein localises to the cytoplasm. Its function is as follows. Required for rescue of stalled ribosomes mediated by trans-translation. Binds to transfer-messenger RNA (tmRNA), required for stable association of tmRNA with ribosomes. tmRNA and SmpB together mimic tRNA shape, replacing the anticodon stem-loop with SmpB. tmRNA is encoded by the ssrA gene; the 2 termini fold to resemble tRNA(Ala) and it encodes a 'tag peptide', a short internal open reading frame. During trans-translation Ala-aminoacylated tmRNA acts like a tRNA, entering the A-site of stalled ribosomes, displacing the stalled mRNA. The ribosome then switches to translate the ORF on the tmRNA; the nascent peptide is terminated with the 'tag peptide' encoded by the tmRNA and targeted for degradation. The ribosome is freed to recommence translation, which seems to be the essential function of trans-translation. In Xylella fastidiosa (strain M23), this protein is SsrA-binding protein.